The sequence spans 362 residues: Chorismate synthase (362 aa).

The tract at residues 39–59 (ADLQGDLDRRKPGTSRYTTPR) is disordered. Residues Arg-48 and Arg-54 each coordinate NADP(+). FMN contacts are provided by residues 125-127 (RSS), 238-239 (NA), Gly-278, 293-297 (KPTSS), and Arg-319.

The protein belongs to the chorismate synthase family. In terms of assembly, homotetramer. FMNH2 is required as a cofactor.

It carries out the reaction 5-O-(1-carboxyvinyl)-3-phosphoshikimate = chorismate + phosphate. It functions in the pathway metabolic intermediate biosynthesis; chorismate biosynthesis; chorismate from D-erythrose 4-phosphate and phosphoenolpyruvate: step 7/7. Functionally, catalyzes the anti-1,4-elimination of the C-3 phosphate and the C-6 proR hydrogen from 5-enolpyruvylshikimate-3-phosphate (EPSP) to yield chorismate, which is the branch point compound that serves as the starting substrate for the three terminal pathways of aromatic amino acid biosynthesis. This reaction introduces a second double bond into the aromatic ring system. The sequence is that of Chorismate synthase from Aeromonas hydrophila subsp. hydrophila (strain ATCC 7966 / DSM 30187 / BCRC 13018 / CCUG 14551 / JCM 1027 / KCTC 2358 / NCIMB 9240 / NCTC 8049).